We begin with the raw amino-acid sequence, 203 residues long: RNA pyrophosphohydrolase (203 aa).

A Nudix hydrolase domain is found at 6 to 149; the sequence is GFRPNVGIIL…KRNVYQMALT (144 aa). Residues 38–59 carry the Nudix box motif; it reads GGIKHGESPEQAMFRELHEEVG. A disordered region spans residues 170 to 203; the sequence is RAHRRDEGSEHNDHLDPTGPHDAGASVSEPKQAE. The segment covering 173 to 185 has biased composition (basic and acidic residues); sequence RRDEGSEHNDHLD.

Belongs to the Nudix hydrolase family. RppH subfamily. A divalent metal cation is required as a cofactor.

In terms of biological role, accelerates the degradation of transcripts by removing pyrophosphate from the 5'-end of triphosphorylated RNA, leading to a more labile monophosphorylated state that can stimulate subsequent ribonuclease cleavage. In Leptothrix cholodnii (strain ATCC 51168 / LMG 8142 / SP-6) (Leptothrix discophora (strain SP-6)), this protein is RNA pyrophosphohydrolase.